We begin with the raw amino-acid sequence, 561 residues long: uncharacterized protein (561 aa).

Transmembrane regions (helical) follow at residues 29–49 (FIFN…KKII) and 80–100 (FLFH…ASII).

The protein localises to the cell membrane. This is an uncharacterized protein from Mycoplasma genitalium (strain ATCC 33530 / DSM 19775 / NCTC 10195 / G37) (Mycoplasmoides genitalium).